The chain runs to 192 residues: Casparian strip membrane protein 1 (192 aa).

At 1 to 30 the chain is on the cytoplasmic side; it reads MSTTVDVPESSNVAKGKAIAVARPGGWKKG. The chain crosses the membrane as a helical span at residues 31–51; the sequence is LAIMDFILRLGGIAASLGAAA. Residues 52–80 are Extracellular-facing; it reads TMGTSDQTLPFFTQFFQFEASYDSFTTFQ. The helical transmembrane segment at 81–101 threads the bilayer; it reads FFVITMALVAGYLVLSLPFSV. At 102–113 the chain is on the cytoplasmic side; the sequence is VAIIRPHAPGPR. The chain crosses the membrane as a helical span at residues 114 to 134; the sequence is LFLIILDTVFLTLATASGASA. Residues 135–166 lie on the Extracellular side of the membrane; that stretch reads AAIVYLAHNGNQDSNWLAICNQFGDFCAQTSG. Residues 167–187 form a helical membrane-spanning segment; it reads AVVASFVAVVILVLLVIMSAL. Topologically, residues 188–192 are cytoplasmic; it reads ALRRH.

The protein belongs to the Casparian strip membrane proteins (CASP) family. Homodimer and heterodimers.

It localises to the cell membrane. Its function is as follows. Regulates membrane-cell wall junctions and localized cell wall deposition. Required for establishment of the Casparian strip membrane domain (CSD) and the subsequent formation of Casparian strips, a cell wall modification of the root endodermis that determines an apoplastic barrier between the intraorganismal apoplasm and the extraorganismal apoplasm and prevents lateral diffusion. The chain is Casparian strip membrane protein 1 from Vigna unguiculata (Cowpea).